We begin with the raw amino-acid sequence, 145 residues long: D-aminoacyl-tRNA deacylase (145 aa).

The Gly-cisPro motif, important for rejection of L-amino acids motif lies at 137-138 (GP).

This sequence belongs to the DTD family. Homodimer.

The protein localises to the cytoplasm. It carries out the reaction glycyl-tRNA(Ala) + H2O = tRNA(Ala) + glycine + H(+). It catalyses the reaction a D-aminoacyl-tRNA + H2O = a tRNA + a D-alpha-amino acid + H(+). In terms of biological role, an aminoacyl-tRNA editing enzyme that deacylates mischarged D-aminoacyl-tRNAs. Also deacylates mischarged glycyl-tRNA(Ala), protecting cells against glycine mischarging by AlaRS. Acts via tRNA-based rather than protein-based catalysis; rejects L-amino acids rather than detecting D-amino acids in the active site. By recycling D-aminoacyl-tRNA to D-amino acids and free tRNA molecules, this enzyme counteracts the toxicity associated with the formation of D-aminoacyl-tRNA entities in vivo and helps enforce protein L-homochirality. This is D-aminoacyl-tRNA deacylase from Idiomarina loihiensis (strain ATCC BAA-735 / DSM 15497 / L2-TR).